We begin with the raw amino-acid sequence, 843 residues long: Glycogen phosphorylase, brain form (843 aa).

Position 2 is an N-acetylalanine (Ala-2). The residue at position 15 (Ser-15) is a Phosphoserine; by PHK; in form phosphorylase A. Residues Asp-43, Tyr-197, and Arg-310 each contribute to the AMP site. Position 197 is a phosphotyrosine (Tyr-197). A Phosphotyrosine modification is found at Tyr-473. Ser-524 bears the Phosphoserine mark. Lys-569 provides a ligand contact to pyridoxal 5'-phosphate. A pyridoxal 5'-phosphate region spans residues 677–678 (TG). The residue at position 681 (Lys-681) is an N6-(pyridoxal phosphate)lysine.

This sequence belongs to the glycogen phosphorylase family. As to quaternary structure, homodimer. Dimers associate into a tetramer to form the enzymatically active phosphorylase A. Pyridoxal 5'-phosphate serves as cofactor. Post-translationally, phosphorylation of Ser-15 converts phosphorylase B (unphosphorylated) to phosphorylase A.

It carries out the reaction [(1-&gt;4)-alpha-D-glucosyl](n) + phosphate = [(1-&gt;4)-alpha-D-glucosyl](n-1) + alpha-D-glucose 1-phosphate. Activity of phosphorylase is controlled both by allosteric means (through the non-covalent binding of metabolites) and by covalent modification. Thus AMP allosterically activates, whereas ATP, ADP, and glucose-6-phosphate allosterically inhibit, phosphorylase B. Glycogen phosphorylase that regulates glycogen mobilization. Phosphorylase is an important allosteric enzyme in carbohydrate metabolism. Enzymes from different sources differ in their regulatory mechanisms and in their natural substrates. However, all known phosphorylases share catalytic and structural properties. This chain is Glycogen phosphorylase, brain form (Pygb), found in Mus musculus (Mouse).